Consider the following 499-residue polypeptide: MSDGEDHETANADDRDETVVRRDRFAGGPARSFLSSLSDDERIFAADLAVDRAHVVMLAEREIIDRETAGDVLAALADVEDAGHDALPDGEDVHEAIESAVIERVGPDGGKMHTARSRNDEVAACIRYRLREDILDLIETVVGAREQLIEVARAEDGTVMPGYTHLQPAQPTTVAHWVLSYEQALQRDTGRLLDAYERVNQNPLGSAAFAGTPFDVDRERTAALLGFDSVAENSMDASATRDFLVETTSAVATLATTLSGLAEDVVVMASKGHVALDDDYASTSSIMPQKKNPDTLELVRGRTGDAVAGLNGLLTNLKGQPRAYNRDLQRAGRHAWDAIDSVTESVEVAAGAVATADWPAETLEVAATDGFATATGVADLLAMAGVPFRTAHEVVAEAAAGLGPEEDAPDYEALSGLAEDVLGEPLSTYVDRDALEAALDPTESVAMRDSRGGPAPDAVAEQVSVAVDALAADREVLADRRQAVSQAADRRQTEVDRYV.

The segment at 1 to 22 (MSDGEDHETANADDRDETVVRR) is disordered. Residues 7–22 (HETANADDRDETVVRR) are compositionally biased toward basic and acidic residues.

Belongs to the lyase 1 family. Argininosuccinate lyase subfamily.

It is found in the cytoplasm. It catalyses the reaction 2-(N(omega)-L-arginino)succinate = fumarate + L-arginine. The protein operates within amino-acid biosynthesis; L-arginine biosynthesis; L-arginine from L-ornithine and carbamoyl phosphate: step 3/3. The polypeptide is Argininosuccinate lyase (Haloarcula marismortui (strain ATCC 43049 / DSM 3752 / JCM 8966 / VKM B-1809) (Halobacterium marismortui)).